The chain runs to 1015 residues: Condensin complex subunit 3 (1015 aa).

HEAT repeat units lie at residues 94–131 (GLLNYLFTFLLKSHEANSNAVRFRVCLLINKLLGSMPE), 138–173 (DVFDKINKAMLIRLKDKIPNVRIQAVLALSRLQDPK), 174–212 (DDECPVVNAYATLIENDSNPEVRRAVLSCIAPSAKTLPK), 238–275 (MRAMSIAQRVMLLQQGLNDRSDAVKQAMQKHLLQGWLR), and 276–313 (FSEGNILELLHRLDVENSSEVAVSVLNALFSITPLSEL). Ser390 bears the Phosphoserine mark. 3 HEAT repeats span residues 399–436 (EFIGQQLILIIKSLDTSEEGGRKKLLAVLQEILILPTI), 439–478 (SLVSFLVERLLHIIIDDNKRTQIVTEIISEIRAPIVTVGV), and 617–654 (DFARKHFVLLLQVLQIDDVTIKISALKAIFDQLMTFGI). Ser674 carries the post-translational modification Phosphoserine. HEAT repeat units follow at residues 687–724 (ATAKNVLKLLSDFLDSEVSELRTGAAEGLAKLMFSGLL) and 865–907 (KDLL…QAEA). Position 931 is a phosphothreonine (Thr931). Residues 941 to 950 (ASKSTQLKTN) show a composition bias toward polar residues. A disordered region spans residues 941 to 994 (ASKSTQLKTNRGQRKVTVSARTNRRCQTAEADSESDHEVPEPESEMKMRLPRRA). Residues Ser973, Ser975, Ser1002, and Ser1015 each carry the phosphoserine modification. Basic and acidic residues predominate over residues 974–988 (ESDHEVPEPESEMKM).

It belongs to the CND3 (condensin subunit 3) family. Component of the condensin complex, which contains the SMC2 and SMC4 heterodimer, and three non SMC subunits that probably regulate the complex: NCAPH/BRRN1, NCAPD2/CAPD2 and NCAPG. In terms of processing, phosphorylated by CDK1. Its phosphorylation, as well as that of NCAPD2 and NCAPH subunits, activates the condensin complex and is required for chromosome condensation. Highly expressed in testis.

Its subcellular location is the nucleus. It localises to the cytoplasm. The protein resides in the chromosome. Its function is as follows. Regulatory subunit of the condensin complex, a complex required for conversion of interphase chromatin into mitotic-like condense chromosomes. The condensin complex probably introduces positive supercoils into relaxed DNA in the presence of type I topoisomerases and converts nicked DNA into positive knotted forms in the presence of type II topoisomerases. This Homo sapiens (Human) protein is Condensin complex subunit 3 (NCAPG).